We begin with the raw amino-acid sequence, 551 residues long: UvrABC system protein C (551 aa).

The GIY-YIG domain maps to E12–I87. The 36-residue stretch at E193–L228 folds into the UVR domain.

Belongs to the UvrC family. In terms of assembly, interacts with UvrB in an incision complex.

The protein localises to the cytoplasm. The UvrABC repair system catalyzes the recognition and processing of DNA lesions. UvrC both incises the 5' and 3' sides of the lesion. The N-terminal half is responsible for the 3' incision and the C-terminal half is responsible for the 5' incision. This Thermosipho africanus (strain TCF52B) protein is UvrABC system protein C.